The primary structure comprises 179 residues: ADP-ribosylation factor-like protein 5A (179 aa).

Residue Gly-2 is the site of N-myristoyl glycine attachment. GTP contacts are provided by residues 23 to 30 (GLDNAGKT), 66 to 70 (DIGGQ), 125 to 128 (NKQD), and Ala-159.

Belongs to the small GTPase superfamily. Arf family.

Functionally, lacks ADP-ribosylation enhancing activity. The sequence is that of ADP-ribosylation factor-like protein 5A (Arl5a) from Mus musculus (Mouse).